A 1071-amino-acid chain; its full sequence is Serine/threonine-protein phosphatase 6 regulatory ankyrin repeat subunit C (1071 aa).

ANK repeat units lie at residues 7-36 (SDQPPLVQAIFNRNADEVKLFLHKKDEVNA), 40-69 (ERRTPLHAAAWLGDVHIMDLLISAGANVNA), 73-102 (VWLTPLHRAAASRNERAVGLLLRKGADVTA), 106-135 (YWQTPLHIAAANRATRCVETLLPHVSSLNM), 139-168 (TGRAPLHHAAQSGYQEMVKLLLNKGANLSA), 172-201 (KDRQPIHWAAYLGHLEVVKLLVSQGSDKSC), 205-234 (RGYTPLHAAAASGHVDVVKYLLRNGAEIDE), 238-267 (FGNTALHVACYTGQEAVANELVNRGANVNQ), 271-301 (RGYTPLHLAAVSTNGALCLELLVNNGADVNM), 305-334 (EGKSPLHMAAIHGRFTRSQILIQNGGEIDC), 338-367 (YGNTPLHVAAKYGHELLISTLMTNGADTAR), 371-400 (HGMFPLHLAVLYGSSDCCRKLLSSGQLYSI), 422-451 (FGRTCLHAAASGGNIECLNLLLSSGADMNK), 455-484 (FGRTPLHYAAANGRYQCVVVLVGAGAEVNE), 488-539 (SGCT…DPCL), 543-573 (KGYSAVHYAAAHGNKQNLELLLEMCFNTLGD), 578-607 (GSISPLHLAVESGHWECVTVLIESGVCVDV), 611-640 (VGRSVLYLASQRGHSRCVELLLSQSASCLL), 645-674 (SKWGPLHVAAANGHSECLRMLLCSEGGADL), 681-710 (EGQTPLMLAVLGGHTDCVHLLLERGACPDM), 714-743 (RGRTALHRGAVMGREDCLTALLSHNVSVLS), 747-776 (QGRSALHLAASCGHADILSNLLSAADHSQP), 784-814 (HGYTPAHWAAYHGHEDCLEVLLELKPCSIQE), 816-845 (NPFTPLHCALINGHSGSAELLLESSVCNSL), 852-881 (KGRTPLHAAAVAEDVAGLQLVLRQGADIDA), 885-915 (SGRSALMVAADYGQSGAVALLLHRAKADLSL), 919-951 (NKNTALHLACSKAHEMCAMLILKEIHNPILINA), and 955-984 (MLQMPLHIAARNGLATVVQALLNRGATVLA).

In terms of assembly, protein phosphatase 6 (PP6) holoenzyme is proposed to be a heterotrimeric complex formed by the catalytic subunit, a SAPS domain-containing subunit (PP6R) and an ankyrin repeat-domain containing regulatory subunit (ARS).

Putative regulatory subunit of protein phosphatase 6 (PP6) that may be involved in the recognition of phosphoprotein substrates. In Danio rerio (Zebrafish), this protein is Serine/threonine-protein phosphatase 6 regulatory ankyrin repeat subunit C (ankrd52).